We begin with the raw amino-acid sequence, 644 residues long: (E2-independent) E3 ubiquitin-conjugating enzyme FATS (644 aa).

The segment at 1–67 (MISPVVISRL…LGILTPSDDQ (67 aa)) is required for interaction with p53/TP53. Disordered stretches follow at residues 62–83 (TPSDDQGLETEPLSTGDNLGKG), 305–349 (LGSG…SSHT), 367–413 (VLSG…SILS), and 475–507 (NEDPTVTPEPSPATPSPSTPEGAQSSDPSEDSY). The tract at residues 67-175 (QGLETEPLST…RLSARQDYWV (109 aa)) is required for interaction with HDAC1. The segment covering 398-410 (EGDSSPSSDGQPS) has biased composition (low complexity). A compositionally biased stretch (pro residues) spans 481-492 (TPEPSPATPSPS). The interval 516-644 (TLQEALEVHR…LDQLLQRNAV (129 aa)) is ALMS motif. Positions 598-629 (KRIYNNLPEVKKKKEEQKKRMILQSNRLRAEV) form a coiled coil.

In terms of assembly, interacts with HDAC1; the interaction prevents binding of HDAC1 to CDKN1A/p21 and facilitates the acetylation and stabilization of CDKN1A/p21. Interacts with p53/TP53; the interaction inhibits binding of p53/TP53 and MDM2. As to expression, highly expressed in testis. Weak expression found in brain, lung, heart, ovary, thymus, spleen and kidney.

The protein resides in the cytoplasm. The protein localises to the cytoskeleton. It is found in the microtubule organizing center. It localises to the centrosome. In terms of biological role, tumor suppressor that is required to sustain G2/M checkpoint after DNA damage. Acts as a p53/TP53 activator by inhibiting MDM2 binding to p53/TP53 and stimulating non-proteolytic polyubiquitination of p53/TP53. Exhibits ubiquitin ligase (E3) activity and assemble ubiquitin polymers through 'Lys-11'- (K11-), 'Lys-29'- (K29-) and 'Lys-63'- (K63)-linkages, independently of the ubiquitin-conjugating enzyme (E2). Promotes p53/TP53-dependent transcription of CDKN1A/p21, leading to robust checkpoint response. Mediates CDKN1A/p21 protein stability in a ubiquitin-independent manner. Interacts with HDAC1 and prevents binding of HDAC1 to CDKN1A/p21 and facilitates the acetylation and stabilization of CDKN1A/p21. May have a role in the assembly of primary cilia. The chain is (E2-independent) E3 ubiquitin-conjugating enzyme FATS from Mus musculus (Mouse).